Here is a 243-residue protein sequence, read N- to C-terminus: Dirigent protein 16 (243 aa).

The first 24 residues, 1–24, serve as a signal peptide directing secretion; the sequence is MMIKQSPFLLLTTILFTVAVFVAA.

Belongs to the plant dirigent protein family. In terms of assembly, homodimer.

It is found in the secreted. The protein localises to the extracellular space. It localises to the apoplast. Functionally, dirigent proteins impart stereoselectivity on the phenoxy radical-coupling reaction, yielding optically active lignans from two molecules of coniferyl alcohol in the biosynthesis of lignans, flavonolignans, and alkaloids and thus plays a central role in plant secondary metabolism. The polypeptide is Dirigent protein 16 (DIR16) (Arabidopsis thaliana (Mouse-ear cress)).